The primary structure comprises 112 residues: Ribonuclease VapC8 (112 aa).

Residues Leu10–Glu109 form the PINc domain. Positions 12 and 101 each coordinate Mg(2+).

The protein belongs to the PINc/VapC protein family. It depends on Mg(2+) as a cofactor.

Functionally, toxic component of a type II toxin-antitoxin (TA) system. An RNase. The cognate antitoxin is VapB8. The polypeptide is Ribonuclease VapC8 (vapC8) (Mycobacterium tuberculosis (strain CDC 1551 / Oshkosh)).